The primary structure comprises 77 residues: Small ribosomal subunit protein uS4 (77 aa).

The interval 45-77 (PFGGGRPGRVKRKNQKAAAKKASGGDGDEEDEE) is disordered. Basic residues predominate over residues 52-63 (GRVKRKNQKAAA).

The protein belongs to the universal ribosomal protein uS4 family.

In Nicotiana tabacum (Common tobacco), this protein is Small ribosomal subunit protein uS4 (RPS9).